Consider the following 905-residue polypeptide: DNA gyrase subunit A (905 aa).

A Topo IIA-type catalytic domain is found at 35–524; that stretch reads IPDVRDGLKP…GEFDQDIEDL (490 aa). The active-site O-(5'-phospho-DNA)-tyrosine intermediate is Tyr123. A GyrA-box motif is present at residues 551 to 557; sequence QKRGGKG. Residues 885 to 905 form a disordered region; that stretch reads TAESEEDSELEEEGLEQSEEV. Positions 886–905 are enriched in acidic residues; it reads AESEEDSELEEEGLEQSEEV.

It belongs to the type II topoisomerase GyrA/ParC subunit family. Heterotetramer, composed of two GyrA and two GyrB chains. In the heterotetramer, GyrA contains the active site tyrosine that forms a transient covalent intermediate with DNA, while GyrB binds cofactors and catalyzes ATP hydrolysis.

The protein resides in the cytoplasm. The catalysed reaction is ATP-dependent breakage, passage and rejoining of double-stranded DNA.. A type II topoisomerase that negatively supercoils closed circular double-stranded (ds) DNA in an ATP-dependent manner to modulate DNA topology and maintain chromosomes in an underwound state. Negative supercoiling favors strand separation, and DNA replication, transcription, recombination and repair, all of which involve strand separation. Also able to catalyze the interconversion of other topological isomers of dsDNA rings, including catenanes and knotted rings. Type II topoisomerases break and join 2 DNA strands simultaneously in an ATP-dependent manner. The chain is DNA gyrase subunit A from Rickettsia conorii (strain ATCC VR-613 / Malish 7).